The following is a 140-amino-acid chain: Lipoprotein MlpG (140 aa).

Positions 1–17 (MKIINILFCLFLLMLNG) are cleaved as a signal peptide. The N-palmitoyl cysteine moiety is linked to residue cysteine 18. Residue cysteine 18 is the site of S-diacylglycerol cysteine attachment. The segment at 22–57 (DTNTKQTKSRQKRDLTQKEATQEKPKSKSKEDLLRE) is disordered. Positions 33-57 (KRDLTQKEATQEKPKSKSKEDLLRE) are enriched in basic and acidic residues.

It belongs to the Multicopy lipoprotein (Mlp) family.

The protein resides in the cell outer membrane. In terms of biological role, an outer membrane protein that may participate in pathogenesis. Some human Lyme disease patients have antibodies against this protein. The Mlp proteins probably undergo intragenic recombination, generating new alleles. The chain is Lipoprotein MlpG from Borreliella burgdorferi (strain ATCC 35210 / DSM 4680 / CIP 102532 / B31) (Borrelia burgdorferi).